A 167-amino-acid polypeptide reads, in one-letter code: Lipoprotein signal peptidase (167 aa).

A run of 2 helical transmembrane segments spans residues 56–76 (FAPP…VLVF) and 84–104 (TPIF…NMID). Residues aspartate 113 and aspartate 139 contribute to the active site. A helical transmembrane segment spans residues 132 to 152 (WPIFNVADSAITIGACMLVLF).

It belongs to the peptidase A8 family.

It localises to the cell inner membrane. It carries out the reaction Release of signal peptides from bacterial membrane prolipoproteins. Hydrolyzes -Xaa-Yaa-Zaa-|-(S,diacylglyceryl)Cys-, in which Xaa is hydrophobic (preferably Leu), and Yaa (Ala or Ser) and Zaa (Gly or Ala) have small, neutral side chains.. It functions in the pathway protein modification; lipoprotein biosynthesis (signal peptide cleavage). Its function is as follows. This protein specifically catalyzes the removal of signal peptides from prolipoproteins. The protein is Lipoprotein signal peptidase of Chlorobium luteolum (strain DSM 273 / BCRC 81028 / 2530) (Pelodictyon luteolum).